Here is a 129-residue protein sequence, read N- to C-terminus: MPKTVITPPGTQTPIAPFSPGTLADGIVYVSGTLAFDKDNNVAFPGDAEAQTRQVLETIKSVIETAGGTMEDVTMNHIFLTDWVHYAPMNKVYAEYFPGDKPARYCIQCGLVKPGFVVEIASVAHIGKT.

Belongs to the RutC family.

The catalysed reaction is (Z)-3-aminoacrylate + H2O + H(+) = 3-oxopropanoate + NH4(+). Involved in pyrimidine catabolism. Catalyzes the deamination of 3-aminoacrylate to malonic semialdehyde, a reaction that can also occur spontaneously. RutC may facilitate the reaction and modulate the metabolic fitness, rather than catalyzing essential functions. The protein is 3-aminoacrylate deaminase RutC of Caulobacter vibrioides (strain ATCC 19089 / CIP 103742 / CB 15) (Caulobacter crescentus).